The primary structure comprises 139 residues: Small ribosomal subunit protein uS11 (139 aa).

The interval 118–139 is disordered; the sequence is EDVTPIPHDGTRPKGGRRGRRV.

The protein belongs to the universal ribosomal protein uS11 family. As to quaternary structure, part of the 30S ribosomal subunit.

In terms of biological role, located on the platform of the 30S subunit. This is Small ribosomal subunit protein uS11 from Thermococcus sibiricus (strain DSM 12597 / MM 739).